The chain runs to 59 residues: Large ribosomal subunit protein bL32 (59 aa).

The span at 1-16 (MAVPKRKTSPSKRGMR) shows a compositional bias: basic residues. The interval 1–41 (MAVPKRKTSPSKRGMRRSADALKAPTYIEDKNSGELRRPHH) is disordered. The segment covering 28–41 (IEDKNSGELRRPHH) has biased composition (basic and acidic residues).

The protein belongs to the bacterial ribosomal protein bL32 family.

This Bartonella henselae (strain ATCC 49882 / DSM 28221 / CCUG 30454 / Houston 1) (Rochalimaea henselae) protein is Large ribosomal subunit protein bL32.